Consider the following 272-residue polypeptide: Putative MgpC-like protein MPN_102 (272 aa).

The protein belongs to the MgpC family.

This chain is Putative MgpC-like protein MPN_102, found in Mycoplasma pneumoniae (strain ATCC 29342 / M129 / Subtype 1) (Mycoplasmoides pneumoniae).